We begin with the raw amino-acid sequence, 272 residues long: Shikimate dehydrogenase (NADP(+)) (272 aa).

Residues 14-16 (SKS) and Thr-61 each bind shikimate. Lys-65 serves as the catalytic Proton acceptor. Glu-77 provides a ligand contact to NADP(+). Positions 86 and 102 each coordinate shikimate. NADP(+) contacts are provided by residues 126–130 (GAGGA), 149–154 (NRTQEK), and Met-213. Tyr-215 provides a ligand contact to shikimate. Gly-237 lines the NADP(+) pocket.

It belongs to the shikimate dehydrogenase family. As to quaternary structure, homodimer.

The enzyme catalyses shikimate + NADP(+) = 3-dehydroshikimate + NADPH + H(+). It participates in metabolic intermediate biosynthesis; chorismate biosynthesis; chorismate from D-erythrose 4-phosphate and phosphoenolpyruvate: step 4/7. Functionally, involved in the biosynthesis of the chorismate, which leads to the biosynthesis of aromatic amino acids. Catalyzes the reversible NADPH linked reduction of 3-dehydroshikimate (DHSA) to yield shikimate (SA). In Erwinia tasmaniensis (strain DSM 17950 / CFBP 7177 / CIP 109463 / NCPPB 4357 / Et1/99), this protein is Shikimate dehydrogenase (NADP(+)).